A 22-amino-acid polypeptide reads, in one-letter code: Unknown protein 20 from 2D-PAGE (22 aa).

This Bombyx mori (Silk moth) protein is Unknown protein 20 from 2D-PAGE.